The sequence spans 380 residues: O-phospho-L-seryl-tRNA:Cys-tRNA synthase (380 aa).

Pyridoxal 5'-phosphate is bound by residues 86 to 87 (AR), N192, and 215 to 217 (SGH). K218 carries the N6-(pyridoxal phosphate)lysine modification.

The protein belongs to the SepCysS family. In terms of assembly, homodimer. Interacts with SepRS. It depends on pyridoxal 5'-phosphate as a cofactor.

The enzyme catalyses O-phospho-L-seryl-tRNA(Cys) + hydrogen sulfide + H(+) = L-cysteinyl-tRNA(Cys) + phosphate. Converts O-phospho-L-seryl-tRNA(Cys) (Sep-tRNA(Cys)) to L-cysteinyl-tRNA(Cys) (Cys-tRNA(Cys)). This is O-phospho-L-seryl-tRNA:Cys-tRNA synthase from Methanococcus maripaludis (strain DSM 14266 / JCM 13030 / NBRC 101832 / S2 / LL).